The primary structure comprises 273 residues: Undecaprenyl-diphosphatase (273 aa).

The next 7 membrane-spanning stretches (helical) occupy residues 6-26 (SLLI…LPVS), 45-65 (AKTF…VMFW), 90-110 (LTLI…LVFH), 116-136 (LFNP…LIAA), 190-210 (YAAS…ATVL), 222-242 (ADIP…LIAI), and 252-272 (ISFI…YVVF).

This sequence belongs to the UppP family.

It localises to the cell inner membrane. It catalyses the reaction di-trans,octa-cis-undecaprenyl diphosphate + H2O = di-trans,octa-cis-undecaprenyl phosphate + phosphate + H(+). Its function is as follows. Catalyzes the dephosphorylation of undecaprenyl diphosphate (UPP). Confers resistance to bacitracin. This is Undecaprenyl-diphosphatase from Salmonella heidelberg (strain SL476).